Reading from the N-terminus, the 242-residue chain is Small ribosomal subunit protein uS2 (242 aa).

The protein belongs to the universal ribosomal protein uS2 family.

The protein is Small ribosomal subunit protein uS2 of Vibrio campbellii (strain ATCC BAA-1116).